Reading from the N-terminus, the 100-residue chain is Urease subunit gamma (100 aa).

This sequence belongs to the urease gamma subunit family. In terms of assembly, heterotrimer of UreA (gamma), UreB (beta) and UreC (alpha) subunits. Three heterotrimers associate to form the active enzyme.

It localises to the cytoplasm. The enzyme catalyses urea + 2 H2O + H(+) = hydrogencarbonate + 2 NH4(+). Its pathway is nitrogen metabolism; urea degradation; CO(2) and NH(3) from urea (urease route): step 1/1. The sequence is that of Urease subunit gamma from Alkalilimnicola ehrlichii (strain ATCC BAA-1101 / DSM 17681 / MLHE-1).